The following is a 307-amino-acid chain: Elongation factor Ts (307 aa).

The segment at 79–82 (TDFV) is involved in Mg(2+) ion dislocation from EF-Tu.

The protein belongs to the EF-Ts family.

Its subcellular location is the cytoplasm. Functionally, associates with the EF-Tu.GDP complex and induces the exchange of GDP to GTP. It remains bound to the aminoacyl-tRNA.EF-Tu.GTP complex up to the GTP hydrolysis stage on the ribosome. This is Elongation factor Ts (tsf) from Bartonella quintana (strain Toulouse) (Rochalimaea quintana).